The sequence spans 355 residues: S-adenosylmethionine:tRNA ribosyltransferase-isomerase (355 aa).

It belongs to the QueA family. In terms of assembly, monomer.

It is found in the cytoplasm. It carries out the reaction 7-aminomethyl-7-carbaguanosine(34) in tRNA + S-adenosyl-L-methionine = epoxyqueuosine(34) in tRNA + adenine + L-methionine + 2 H(+). Its pathway is tRNA modification; tRNA-queuosine biosynthesis. In terms of biological role, transfers and isomerizes the ribose moiety from AdoMet to the 7-aminomethyl group of 7-deazaguanine (preQ1-tRNA) to give epoxyqueuosine (oQ-tRNA). The sequence is that of S-adenosylmethionine:tRNA ribosyltransferase-isomerase from Pectobacterium atrosepticum (strain SCRI 1043 / ATCC BAA-672) (Erwinia carotovora subsp. atroseptica).